Here is a 445-residue protein sequence, read N- to C-terminus: MGENMKKKVVIIGGGAAGMSAASRVKRLKPEWDVKVFEATEWVSHAPCGIPYVVEGLSTPDKLMYYPPEVFIKKRGIDLHLNAEVIEVDTGYVRVRENGGEKSYEWDYLVFANGASPQVPAIEGVNLKGVFTADLPPDALAIREYMEKYKVENVVIIGGGYIGIEMAEAFAAQGKNVTMIVRGERVLRRSFDKEVTDILEEKLKKHVNLRLQEITMKIEGEERVEKVVTDAGEYKAELVILATGIKPNIELAKQLGVRIGETGAIWTNEKMQTSVENVYAAGDVAETRHVITGRRVWVPLAPAGNKMGYVAGSNIAGKELHFPGVLGTAVTKFMDVEIGKTGLTEMEALKEGYDVRTAFIKASTRPHYYPGGREIWLKGVVDNETNRLLGVQVVGSDILPRIDTAAAMLMAGFTTKDAFFTDLAYAPPFAPVWDPLIVLARVLKF.

Position 16–17 (16–17 (AA)) interacts with FAD. Arg27 contributes to the CoA binding site. FAD is bound by residues 38–39 (EA) and 45–47 (HAP). CoA contacts are provided by residues 44–48 (SHAPC), 65–66 (YY), and Arg75. Catalysis depends on Cys48, which acts as the Redox-active. 3 residues coordinate FAD: Val85, Asp283, and Ala301. Positions 305 and 361 each coordinate CoA. Position 425 (Tyr425) interacts with FAD. CoA contacts are provided by Trp433 and Arg441.

This sequence belongs to the class-III pyridine nucleotide-disulfide oxidoreductase family. Homodimer. Homotetramer. Requires FAD as cofactor.

The enzyme catalyses NADP(+) + 2 CoA = CoA-disulfide + NADPH + H(+). It catalyses the reaction NAD(+) + 2 CoA = CoA-disulfide + NADH + H(+). Functionally, catalyzes the NAD(P)H-dependent reduction of polysulfide, CoA-polysulfides, and CoA persulfide, as well as the reduction of a range of other small persulfides, including TNB and glutathione persulfides. The likely in vivo substrates are di-, poly-, and persulfide derivatives of coenzyme A, although polysulfide itself is also efficiently reduced. Shows coenzyme A disulfide reductase (CoADR) activity with both NADH and NADPH, with a preference for NADPH. May also play a role in the reduction of elemental sulfur. The sequence is that of NAD(P)H coenzyme A polysulfide/persulfide reductase from Pyrococcus horikoshii (strain ATCC 700860 / DSM 12428 / JCM 9974 / NBRC 100139 / OT-3).